The sequence spans 522 residues: Lysine--tRNA ligase (522 aa).

The 'HIGH' region motif lies at 44-52; that stretch reads PSGLPHIGT. Residues 290–294 carry the 'KMSKS' region motif; it reads KISKS. Residue Lys-293 coordinates ATP.

This sequence belongs to the class-I aminoacyl-tRNA synthetase family.

The protein resides in the cytoplasm. It carries out the reaction tRNA(Lys) + L-lysine + ATP = L-lysyl-tRNA(Lys) + AMP + diphosphate. The polypeptide is Lysine--tRNA ligase (Rickettsia peacockii (strain Rustic)).